A 349-amino-acid polypeptide reads, in one-letter code: Thiamine-phosphate synthase (349 aa).

Residues 1 to 125 are unknown; the sequence is MGCESSLDPR…SAEAAAIRYG (125 aa). The interval 63-85 is disordered; that stretch reads RARSTVTDPGAGMEHPAQLDRHS. The tract at residues 126–349 is thiamine-phosphate synthase; sequence LYDLEVTCLT…LLSSLSRPTL (224 aa). 4-amino-2-methyl-5-(diphosphooxymethyl)pyrimidine is bound by residues 177–181 and Asn209; that span reads QHRCK. Residues Asp210 and Asp229 each coordinate Mg(2+). 4-amino-2-methyl-5-(diphosphooxymethyl)pyrimidine is bound by residues Ser248 and Lys277. Residue Gly304 coordinates 2-[(2R,5Z)-2-carboxy-4-methylthiazol-5(2H)-ylidene]ethyl phosphate.

The protein belongs to the thiamine-phosphate synthase family. The cofactor is Mg(2+).

It catalyses the reaction 2-[(2R,5Z)-2-carboxy-4-methylthiazol-5(2H)-ylidene]ethyl phosphate + 4-amino-2-methyl-5-(diphosphooxymethyl)pyrimidine + 2 H(+) = thiamine phosphate + CO2 + diphosphate. The catalysed reaction is 2-(2-carboxy-4-methylthiazol-5-yl)ethyl phosphate + 4-amino-2-methyl-5-(diphosphooxymethyl)pyrimidine + 2 H(+) = thiamine phosphate + CO2 + diphosphate. It carries out the reaction 4-methyl-5-(2-phosphooxyethyl)-thiazole + 4-amino-2-methyl-5-(diphosphooxymethyl)pyrimidine + H(+) = thiamine phosphate + diphosphate. The protein operates within cofactor biosynthesis; thiamine diphosphate biosynthesis; thiamine phosphate from 4-amino-2-methyl-5-diphosphomethylpyrimidine and 4-methyl-5-(2-phosphoethyl)-thiazole: step 1/1. Functionally, condenses 4-methyl-5-(beta-hydroxyethyl)thiazole monophosphate (THZ-P) and 2-methyl-4-amino-5-hydroxymethyl pyrimidine pyrophosphate (HMP-PP) to form thiamine monophosphate (TMP). In Parasynechococcus marenigrum (strain WH8102), this protein is Thiamine-phosphate synthase.